The following is a 212-amino-acid chain: Probable dual specificity protein phosphatase DDB_G0269404 (212 aa).

The region spanning 30–169 is the Tyrosine-protein phosphatase domain; the sequence is FDAQEVIPNL…LINYEATILK (140 aa). The Phosphocysteine intermediate role is filled by Cys-113.

It belongs to the protein-tyrosine phosphatase family. Non-receptor class dual specificity subfamily.

The catalysed reaction is O-phospho-L-tyrosyl-[protein] + H2O = L-tyrosyl-[protein] + phosphate. It carries out the reaction O-phospho-L-seryl-[protein] + H2O = L-seryl-[protein] + phosphate. The enzyme catalyses O-phospho-L-threonyl-[protein] + H2O = L-threonyl-[protein] + phosphate. Its function is as follows. Has a dual specificity toward Ser/Thr and Tyr-containing proteins. The chain is Probable dual specificity protein phosphatase DDB_G0269404 from Dictyostelium discoideum (Social amoeba).